A 2032-amino-acid chain; its full sequence is Cytoskeleton-associated protein 5 (2032 aa).

TOG regions lie at residues 1–223 (MGDD…KLPT) and 268–502 (YELL…LIHG). Lysine 48 carries the N6-acetyllysine modification. 3 HEAT repeats span residues 159–197 (IILLKPIIKVLPKLFESREKAVRDEAKLIAVEIYRWIRD), 356–394 (GQYAGHVVPTILEKFKEKKPQVVQALQEAIDAIFLTTTL), and 434–472 (KSLLKPFCAALLKHINDSAPEVRDAAFEALGTALKVVGE). The tract at residues 516-579 (PLPGRTAASG…GTKNKKGLET (64 aa)) is disordered. Residues 543 to 554 (LKKAPAAKAGGP) show a composition bias toward low complexity. The segment at 588 to 817 (SIEVCEEKAS…EFEKMQGQSP (230 aa)) is TOG 3. One copy of the HEAT 4 repeat lies at 750-788 (GLNVKAFISNVKTALAATNPAVRTAAITLLGVMYLYVGP). A disordered region spans residues 811–851 (KMQGQSPPAPTRGISKHSTSGTDEGEDGDEPDDGSNDVVDL). Serine 816 and serine 845 each carry phosphoserine. Residues 833–845 (DEGEDGDEPDDGS) are compositionally biased toward acidic residues. TOG stretches follow at residues 853–1081 (PRTE…VNMP) and 1193–1428 (IEQL…KRPS). HEAT repeat units follow at residues 855–893 (TEISDKITSELVSKIGDKNWKIRKEGLDEVAGIINDAKF), 936–974 (KQHVKNLGIPIITVLGDSKNNVRAAALATVNAWAEQTGM), and 1013–1051 (PTDLILCVPHLYSCLEDRNGDVRKKAQDALPFFMMHLGY). The segment at 1077-1160 (KVNMPAKPAP…KEDEDKSGPI (84 aa)) is disordered. HEAT repeat units lie at residues 1284–1322 (ENEASSFIPYLVVKVGEPKDVIRKDVRAILNRMCLVYPA), 1324–1357 (KMFPFIMEGTKSKNSKQRAECLEELGCLVESYGM), and 1361–1399 (QPTPGKALKEIAVHIGDRDNAVRNAALNTIVTVYNVHGD). Positions 1422–1443 (RSAKRPSAAPIKQVEEKPQRAQ) are disordered. Position 1469 is a phosphoserine (serine 1469). The tract at residues 1801 to 1822 (SMDQTGSKSDKETEKGASRIDE) is disordered. Over residues 1808–1822 (KSDKETEKGASRIDE) the composition is skewed to basic and acidic residues. Serine 1861 is subject to Phosphoserine. Residues 1932–1957 (PSVYLERLKILRQRCGLDNTKQDDRP) form an interaction with TACC3 region. A disordered region spans residues 1949-2032 (DNTKQDDRPP…RLERIKSSRK (84 aa)). Polar residues predominate over residues 1971 to 1983 (VASSTDMLHSKLS). Residues 1984–1997 (QLRESREQHQHSDL) show a composition bias toward basic and acidic residues. Low complexity predominate over residues 2002 to 2014 (THSSGTVTSSSST). The segment covering 2018–2032 (DDLKKRLERIKSSRK) has biased composition (basic and acidic residues).

It belongs to the TOG/XMAP215 family. In terms of assembly, interacts with TACC1. Interacts with SLAIN2 and SLAIN1. Interacts with HNRNPA2B1. Interacts with TACC3 independently of clathrin. Interacts with TACC3 and clathrin forming the TACC3/ch-TOG/clathrin complex located at spindle inter-microtubules bridges. Interacts with NDC80; indicative for an association with the NDC80 complex. Overexpressed in hepatomas and colonic tumors. Also expressed in skeletal muscle, brain, heart, placenta, lung, liver, kidney and pancreas. Expression is elevated in the brain; highly expressed in the Purkinje cell bodies of the cerebellum.

The protein resides in the cytoplasm. It localises to the cytoskeleton. It is found in the microtubule organizing center. The protein localises to the centrosome. Its subcellular location is the spindle pole. The protein resides in the spindle. It localises to the chromosome. It is found in the centromere. The protein localises to the kinetochore. Binds to the plus end of microtubules and regulates microtubule dynamics and microtubule organization. Acts as a processive microtubule polymerase. Promotes cytoplasmic microtubule nucleation and elongation. Plays a major role in organizing spindle poles. In spindle formation protects kinetochore microtubules from depolymerization by KIF2C and has an essential role in centrosomal microtubule assembly independently of KIF2C activity. Contributes to centrosome integrity. Acts as a component of the TACC3/ch-TOG/clathrin complex proposed to contribute to stabilization of kinetochore fibers of the mitotic spindle by acting as inter-microtubule bridge. The TACC3/ch-TOG/clathrin complex is required for the maintenance of kinetochore fiber tension. Enhances the strength of NDC80 complex-mediated kinetochore-tip microtubule attachments. In Homo sapiens (Human), this protein is Cytoskeleton-associated protein 5 (CKAP5).